The sequence spans 87 residues: Small ribosomal subunit protein bS20 (87 aa).

Residues 1-26 (MANIKSAKKRAVQSEKARKHNASRRS) are disordered.

The protein belongs to the bacterial ribosomal protein bS20 family.

Binds directly to 16S ribosomal RNA. This is Small ribosomal subunit protein bS20 from Klebsiella pneumoniae (strain 342).